The sequence spans 320 residues: ATP-dependent 6-phosphofructokinase (320 aa).

Gly-11 provides a ligand contact to ATP. Residue 21-25 (RAIAR) participates in ADP binding. Residues 72 to 73 (RF) and 102 to 105 (GDGS) contribute to the ATP site. Asp-103 is a Mg(2+) binding site. Residues 125–127 (TID), Arg-162, and 169–171 (MGR) contribute to the substrate site. The active-site Proton acceptor is Asp-127. ADP is bound by residues 185-187 (GAD) and 213-215 (KDH). Residues Glu-222, Arg-243, and 249-252 (HIQR) each bind substrate.

Belongs to the phosphofructokinase type A (PFKA) family. ATP-dependent PFK group I subfamily. Prokaryotic clade 'B1' sub-subfamily. As to quaternary structure, homotetramer. Mg(2+) serves as cofactor.

It is found in the cytoplasm. The enzyme catalyses beta-D-fructose 6-phosphate + ATP = beta-D-fructose 1,6-bisphosphate + ADP + H(+). Its pathway is carbohydrate degradation; glycolysis; D-glyceraldehyde 3-phosphate and glycerone phosphate from D-glucose: step 3/4. Its activity is regulated as follows. Allosterically activated by ADP and other diphosphonucleosides, and allosterically inhibited by phosphoenolpyruvate. Catalyzes the phosphorylation of D-fructose 6-phosphate to fructose 1,6-bisphosphate by ATP, the first committing step of glycolysis. This Ligilactobacillus salivarius (strain UCC118) (Lactobacillus salivarius) protein is ATP-dependent 6-phosphofructokinase.